The sequence spans 34 residues: Mu-theraphotoxin-Pspp1 (34 aa).

Disulfide bonds link cysteine 2/cysteine 17, cysteine 9/cysteine 22, and cysteine 16/cysteine 29. A Phenylalanine amide modification is found at phenylalanine 34.

Belongs to the neurotoxin 10 (Hwtx-1) family. Expressed by the venom gland.

The protein localises to the secreted. Its function is as follows. Voltage-gated sodium channel inhibitor. It is unclear if it selectively inhibits Nav1.7/SCN9A or shows similar potency on all sodium channels tested. According to Escoubas et al., 2006 and Nicolas et al., 2019, it is selective over Nav1.7/SCN9A (90% inhibition at 1 uM), versus Nav1.4 and Nav1.6 (35% inhibition), and shows a small inhibition on all other sodium channels (except Nav1.8/SCN10A). According to Goncalves et al., 2019, it shows a similar inhibition on almost all sodium channels tested (Nav1.1/SCN1A (IC(50)=280.3 nM), Nav1.2/SCN2A (IC(50)=73.7 nM), Nav1.3/SCN3A (IC(50)=201.5 nM), Nav1.4/SCN4A (IC(50)&gt;2100 nM), Nav1.5/SCN5A (IC(50)=710.6 nM), Nav1.6/SCN8A (IC(50)=491.2 nM), and Nav1.7/SCN9A (IC(50)=254.3-260 nM)), except Nav1.8/SCN10A. The voltage-dependence of steady-state Nav1.7/SCN9A channel activation and inactivation are not affected, suggesting that is does not act as a gating-modifier toxin but rather blocks or impedes ion flux through the channel pore. The toxin effect is partial and poorly reversible. In addition to its inhibition to sodium channels, it also shows a small inhibition on rat Kv3.4/KCNC4 potassium channels (20% inhibition at 1 uM). In vivo, when tested on pain models, it shows analgesic activity. This Phlogiellus sp. (Tarantula) protein is Mu-theraphotoxin-Pspp1.